A 215-amino-acid chain; its full sequence is Phosphatidylserine decarboxylase proenzyme (215 aa).

Residue S181 is the Schiff-base intermediate with substrate; via pyruvic acid of the active site. Position 181 is a pyruvic acid (Ser); by autocatalysis (S181).

This sequence belongs to the phosphatidylserine decarboxylase family. PSD-A subfamily. Heterodimer of a large membrane-associated beta subunit and a small pyruvoyl-containing alpha subunit. Requires pyruvate as cofactor. Is synthesized initially as an inactive proenzyme. Formation of the active enzyme involves a self-maturation process in which the active site pyruvoyl group is generated from an internal serine residue via an autocatalytic post-translational modification. Two non-identical subunits are generated from the proenzyme in this reaction, and the pyruvate is formed at the N-terminus of the alpha chain, which is derived from the carboxyl end of the proenzyme. The post-translation cleavage follows an unusual pathway, termed non-hydrolytic serinolysis, in which the side chain hydroxyl group of the serine supplies its oxygen atom to form the C-terminus of the beta chain, while the remainder of the serine residue undergoes an oxidative deamination to produce ammonia and the pyruvoyl prosthetic group on the alpha chain.

It is found in the cell membrane. It catalyses the reaction a 1,2-diacyl-sn-glycero-3-phospho-L-serine + H(+) = a 1,2-diacyl-sn-glycero-3-phosphoethanolamine + CO2. It functions in the pathway phospholipid metabolism; phosphatidylethanolamine biosynthesis; phosphatidylethanolamine from CDP-diacylglycerol: step 2/2. Its function is as follows. Catalyzes the formation of phosphatidylethanolamine (PtdEtn) from phosphatidylserine (PtdSer). This is Phosphatidylserine decarboxylase proenzyme from Polynucleobacter asymbioticus (strain DSM 18221 / CIP 109841 / QLW-P1DMWA-1) (Polynucleobacter necessarius subsp. asymbioticus).